We begin with the raw amino-acid sequence, 557 residues long: Eudesmanediol synthase (557 aa).

Mg(2+)-binding residues include aspartate 310 and aspartate 314. Residues aspartate 310, aspartate 314, arginine 450, and asparagine 453 each contribute to the substrate site. A DDXXD motif motif is present at residues 310–314 (DDTFD). Asparagine 453 and serine 457 together coordinate Mg(2+).

Belongs to the terpene synthase family. In terms of assembly, monomer. Requires Mg(2+) as cofactor. Mn(2+) is required as a cofactor. As to expression, specifically expressed in roots.

It is found in the cytoplasm. It carries out the reaction (2E,6E)-farnesyl diphosphate + 2 H2O = 7-epi-ent-eudesmane-5,11-diol + diphosphate. Its pathway is secondary metabolite biosynthesis; terpenoid biosynthesis. Functionally, component of the volatile terpenes biosynthesis pathways. Dihydroxylated sesquiterpenoid synthase that generates dually hydroxylated products directly from (E,E)-farnesyl diphosphate, primarily eudesmane-2,11-diol, along with two closely related structural isomers. This Zea mays (Maize) protein is Eudesmanediol synthase.